A 60-amino-acid polypeptide reads, in one-letter code: Large ribosomal subunit protein bL32 (60 aa).

The disordered stretch occupies residues 1–60; it reads MAVQQVKKSRSKRDMRRSHDSLTGPTLSTDKSTGELHLRHHVSPNGFYKGKKVVDTKSED. A compositionally biased stretch (basic residues) spans 7-16; the sequence is KKSRSKRDMR.

This sequence belongs to the bacterial ribosomal protein bL32 family.

The polypeptide is Large ribosomal subunit protein bL32 (Francisella philomiragia subsp. philomiragia (strain ATCC 25017 / CCUG 19701 / FSC 153 / O#319-036)).